A 142-amino-acid chain; its full sequence is Putative FK506-binding protein 9-like protein (142 aa).

A PPIase FKBP-type domain is found at 1 to 49 (MDMGLREMCVGEKRTVIIPPHLGYGEAGVDGEVPGSAVLVFDIELLELV). EF-hand domains are found at residues 60 to 95 (WNGE…QVAS) and 105 to 140 (DAEL…AKQD). Residues Asp118, Asn120, Asp122, Lys124, and Glu129 each contribute to the Ca(2+) site.

The protein is Putative FK506-binding protein 9-like protein (FKBP9P1) of Homo sapiens (Human).